Reading from the N-terminus, the 247-residue chain is MAGHSKWANIKHRKAAQDAKRGKIFTKLIRELTVAAKMGGGEPNDNPRLRAAIDKALGQNMTRDTIDRAVKRGAGGDDDGSMDEITYEGYGKGGVAVLVETMTDNVNRTVAEVRHAFSKFGGNLGTSGSVAFLFTKRGEIFFEPGVDEEKLMEVALEAGAEDVEEMGDDGFLVITTPDKSFGEVVDSLRAAGLEFAEAEVTMHPSTEAEMDTDTAETVQKMIDMLEDLDDVQNVYTNASWPAPQEEE.

This sequence belongs to the TACO1 family.

The protein resides in the cytoplasm. The polypeptide is Probable transcriptional regulatory protein ABO_0750 (Alcanivorax borkumensis (strain ATCC 700651 / DSM 11573 / NCIMB 13689 / SK2)).